We begin with the raw amino-acid sequence, 179 residues long: Inner membrane-spanning protein YciB (179 aa).

The next 5 membrane-spanning stretches (helical) occupy residues 22–42, 50–70, 76–96, 121–141, and 149–169; these read IYAA…YSWV, MALI…FFHN, WKVT…QWVM, LAWA…AFWL, and FKVF…GIYI.

The protein belongs to the YciB family.

The protein resides in the cell inner membrane. In terms of biological role, plays a role in cell envelope biogenesis, maintenance of cell envelope integrity and membrane homeostasis. The chain is Inner membrane-spanning protein YciB from Klebsiella pneumoniae subsp. pneumoniae (strain ATCC 700721 / MGH 78578).